Consider the following 309-residue polypeptide: Aspartate carbamoyltransferase catalytic subunit (309 aa).

Carbamoyl phosphate is bound by residues R55 and T56. K85 provides a ligand contact to L-aspartate. 3 residues coordinate carbamoyl phosphate: R106, H135, and Q138. L-aspartate contacts are provided by R168 and R230. 2 residues coordinate carbamoyl phosphate: L268 and P269.

It belongs to the aspartate/ornithine carbamoyltransferase superfamily. ATCase family. As to quaternary structure, heterododecamer (2C3:3R2) of six catalytic PyrB chains organized as two trimers (C3), and six regulatory PyrI chains organized as three dimers (R2).

The catalysed reaction is carbamoyl phosphate + L-aspartate = N-carbamoyl-L-aspartate + phosphate + H(+). It functions in the pathway pyrimidine metabolism; UMP biosynthesis via de novo pathway; (S)-dihydroorotate from bicarbonate: step 2/3. Catalyzes the condensation of carbamoyl phosphate and aspartate to form carbamoyl aspartate and inorganic phosphate, the committed step in the de novo pyrimidine nucleotide biosynthesis pathway. The polypeptide is Aspartate carbamoyltransferase catalytic subunit (Aliivibrio fischeri (strain ATCC 700601 / ES114) (Vibrio fischeri)).